The following is a 344-amino-acid chain: Dihydroorotate dehydrogenase (quinone) (344 aa).

FMN-binding positions include 62-66 and Thr86; that span reads AGLDK. Substrate is bound at residue Lys66. Substrate is bound at residue 111-115; the sequence is NRMGF. FMN-binding residues include Asn139 and Asn172. Asn172 is a substrate binding site. Ser175 serves as the catalytic Nucleophile. Asn177 contributes to the substrate binding site. FMN-binding residues include Lys217 and Thr245. 246 to 247 serves as a coordination point for substrate; the sequence is NT. FMN-binding positions include Gly268, Gly297, and 318 to 319; that span reads YS.

It belongs to the dihydroorotate dehydrogenase family. Type 2 subfamily. Monomer. FMN serves as cofactor.

Its subcellular location is the cell membrane. The catalysed reaction is (S)-dihydroorotate + a quinone = orotate + a quinol. Its pathway is pyrimidine metabolism; UMP biosynthesis via de novo pathway; orotate from (S)-dihydroorotate (quinone route): step 1/1. Catalyzes the conversion of dihydroorotate to orotate with quinone as electron acceptor. This Chromobacterium violaceum (strain ATCC 12472 / DSM 30191 / JCM 1249 / CCUG 213 / NBRC 12614 / NCIMB 9131 / NCTC 9757 / MK) protein is Dihydroorotate dehydrogenase (quinone).